Consider the following 83-residue polypeptide: Small ribosomal subunit protein bS16 (83 aa).

It belongs to the bacterial ribosomal protein bS16 family.

This is Small ribosomal subunit protein bS16 from Shewanella amazonensis (strain ATCC BAA-1098 / SB2B).